Consider the following 66-residue polypeptide: Large ribosomal subunit protein bL31 (66 aa).

Zn(2+) is bound by residues C16, C18, C36, and C39.

Belongs to the bacterial ribosomal protein bL31 family. Type A subfamily. Part of the 50S ribosomal subunit. Requires Zn(2+) as cofactor.

In terms of biological role, binds the 23S rRNA. The protein is Large ribosomal subunit protein bL31 of Sulfurimonas denitrificans (strain ATCC 33889 / DSM 1251) (Thiomicrospira denitrificans (strain ATCC 33889 / DSM 1251)).